Here is a 280-residue protein sequence, read N- to C-terminus: Probable 6-phosphogluconolactonase 2 (280 aa).

The protein belongs to the glucosamine/galactosamine-6-phosphate isomerase family. 6-phosphogluconolactonase subfamily.

It catalyses the reaction 6-phospho-D-glucono-1,5-lactone + H2O = 6-phospho-D-gluconate + H(+). It functions in the pathway carbohydrate degradation; pentose phosphate pathway; D-ribulose 5-phosphate from D-glucose 6-phosphate (oxidative stage): step 2/3. In terms of biological role, hydrolysis of 6-phosphogluconolactone to 6-phosphogluconate. This Oryza sativa subsp. indica (Rice) protein is Probable 6-phosphogluconolactonase 2.